Reading from the N-terminus, the 264-residue chain is 3-methyl-2-oxobutanoate hydroxymethyltransferase (264 aa).

Mg(2+) is bound by residues aspartate 45 and aspartate 84. 3-methyl-2-oxobutanoate-binding positions include 45-46 (DS), aspartate 84, and lysine 112. Glutamate 114 lines the Mg(2+) pocket. The active-site Proton acceptor is glutamate 181.

This sequence belongs to the PanB family. In terms of assembly, homodecamer; pentamer of dimers. Requires Mg(2+) as cofactor.

The protein resides in the cytoplasm. It carries out the reaction 3-methyl-2-oxobutanoate + (6R)-5,10-methylene-5,6,7,8-tetrahydrofolate + H2O = 2-dehydropantoate + (6S)-5,6,7,8-tetrahydrofolate. The protein operates within cofactor biosynthesis; (R)-pantothenate biosynthesis; (R)-pantoate from 3-methyl-2-oxobutanoate: step 1/2. In terms of biological role, catalyzes the reversible reaction in which hydroxymethyl group from 5,10-methylenetetrahydrofolate is transferred onto alpha-ketoisovalerate to form ketopantoate. This is 3-methyl-2-oxobutanoate hydroxymethyltransferase from Shewanella amazonensis (strain ATCC BAA-1098 / SB2B).